Reading from the N-terminus, the 234-residue chain is Small ribosomal subunit protein uS3 (234 aa).

One can recognise a KH type-2 domain in the interval 39-107 (VRKFLNKELA…PAQINIAEVK (69 aa)).

Belongs to the universal ribosomal protein uS3 family. Part of the 30S ribosomal subunit. Forms a tight complex with proteins S10 and S14.

Functionally, binds the lower part of the 30S subunit head. Binds mRNA in the 70S ribosome, positioning it for translation. This Haemophilus ducreyi (strain 35000HP / ATCC 700724) protein is Small ribosomal subunit protein uS3.